The chain runs to 128 residues: Platelet basic protein (128 aa).

A signal peptide spans 1–34 (MSLRLDTTPSCNSARPLHALQVLLLLSLLLTALA). Intrachain disulfides connect Cys-63–Cys-89 and Cys-65–Cys-105.

This sequence belongs to the intercrine alpha (chemokine CxC) family. Beta-thromboglobulin is a homotetramer. In terms of processing, proteolytic removal of residues 1-9 produces the active peptide connective tissue-activating peptide III (CTAP-III) (low-affinity platelet factor IV (LA-PF4)). Proteolytic removal of residues 1-13 produces the active peptide beta-thromboglobulin, which is released from platelets along with platelet factor 4 and platelet-derived growth factor. Post-translationally, NAP-2(1-66) is produced by proteolytical processing, probably after secretion by leukocytes other than neutrophils. In terms of processing, NAP-2(73) and NAP-2(74) seem not be produced by proteolytical processing of secreted precursors but are released in an active form from platelets.

It localises to the secreted. Its function is as follows. LA-PF4 stimulates DNA synthesis, mitosis, glycolysis, intracellular cAMP accumulation, prostaglandin E2 secretion, and synthesis of hyaluronic acid and sulfated glycosaminoglycan. It also stimulates the formation and secretion of plasminogen activator by human synovial cells. NAP-2 is a ligand for CXCR1 and CXCR2, and NAP-2, NAP-2(73), NAP-2(74), NAP-2(1-66), and most potent NAP-2(1-63) are chemoattractants and activators for neutrophils. TC-1 and TC-2 are antibacterial proteins, in vitro released from activated platelet alpha-granules. CTAP-III(1-81) is more potent than CTAP-III desensitize chemokine-induced neutrophil activation. This is Platelet basic protein (PPBP) from Homo sapiens (Human).